Consider the following 461-residue polypeptide: Peptidyl-prolyl cis-trans isomerase-like 4 (461 aa).

The region spanning 1-171 is the PPIase cyclophilin-type domain; the sequence is MSVLLETSLG…KDIRIRHTVI (171 aa). A coiled-coil region spans residues 205–234; the sequence is EELDDNMDEESMEKLRREREARAQALTLEM. In terms of domain architecture, RRM spans 248–326; sequence NVLFVCKLNP…HRIHVDFSQS (79 aa). The interval 341–461 is disordered; it reads KRSGQRGGFG…DERYRERRRR (121 aa). Basic and acidic residues-rich tracts occupy residues 365 to 384 and 398 to 461; these read DNAR…GDKA and SNRD…RRRR.

This sequence belongs to the cyclophilin-type PPIase family. PPIL4 subfamily.

Its subcellular location is the nucleus. The catalysed reaction is [protein]-peptidylproline (omega=180) = [protein]-peptidylproline (omega=0). Its function is as follows. PPIases accelerate the folding of proteins. It catalyzes the cis-trans isomerization of proline imidic peptide bonds in oligopeptides. The polypeptide is Peptidyl-prolyl cis-trans isomerase-like 4 (cyp6) (Aspergillus oryzae (strain ATCC 42149 / RIB 40) (Yellow koji mold)).